Consider the following 105-residue polypeptide: Heat shock protein HspQ (105 aa).

The protein belongs to the HspQ family.

The protein localises to the cytoplasm. Its function is as follows. Involved in the degradation of certain denaturated proteins, including DnaA, during heat shock stress. This Sodalis glossinidius (strain morsitans) protein is Heat shock protein HspQ.